The primary structure comprises 370 residues: Phospho-2-dehydro-3-deoxyheptonate aldolase, tyrosine-inhibited (370 aa).

Ser2 carries the post-translational modification N-acetylserine.

This sequence belongs to the class-I DAHP synthase family.

It catalyses the reaction D-erythrose 4-phosphate + phosphoenolpyruvate + H2O = 7-phospho-2-dehydro-3-deoxy-D-arabino-heptonate + phosphate. The protein operates within metabolic intermediate biosynthesis; chorismate biosynthesis; chorismate from D-erythrose 4-phosphate and phosphoenolpyruvate: step 1/7. Inhibited by tyrosine. Functionally, stereospecific condensation of phosphoenolpyruvate (PEP) and D-erythrose-4-phosphate (E4P) giving rise to 3-deoxy-D-arabino-heptulosonate-7-phosphate (DAHP). This Saccharomyces cerevisiae (strain ATCC 204508 / S288c) (Baker's yeast) protein is Phospho-2-dehydro-3-deoxyheptonate aldolase, tyrosine-inhibited (ARO4).